A 411-amino-acid polypeptide reads, in one-letter code: Arginine deiminase (411 aa).

C401 functions as the Amidino-cysteine intermediate in the catalytic mechanism.

It belongs to the arginine deiminase family.

It localises to the cytoplasm. It catalyses the reaction L-arginine + H2O = L-citrulline + NH4(+). It participates in amino-acid degradation; L-arginine degradation via ADI pathway; carbamoyl phosphate from L-arginine: step 1/2. This chain is Arginine deiminase, found in Streptococcus pyogenes serotype M2 (strain MGAS10270).